The chain runs to 160 residues: UPF0225 protein PP_1119 (160 aa).

The protein belongs to the UPF0225 family.

The sequence is that of UPF0225 protein PP_1119 from Pseudomonas putida (strain ATCC 47054 / DSM 6125 / CFBP 8728 / NCIMB 11950 / KT2440).